A 1297-amino-acid polypeptide reads, in one-letter code: DNA-directed RNA polymerase subunit beta' (1297 aa).

The Zn(2+) site is built by Cys60, Cys62, Cys75, and Cys78. Mg(2+) contacts are provided by Asp535, Asp537, and Asp539. Residues Cys883, Cys961, Cys968, and Cys971 each coordinate Zn(2+).

This sequence belongs to the RNA polymerase beta' chain family. The RNAP catalytic core consists of 2 alpha, 1 beta, 1 beta' and 1 omega subunit. When a sigma factor is associated with the core the holoenzyme is formed, which can initiate transcription. It depends on Mg(2+) as a cofactor. Zn(2+) serves as cofactor.

The enzyme catalyses RNA(n) + a ribonucleoside 5'-triphosphate = RNA(n+1) + diphosphate. In terms of biological role, DNA-dependent RNA polymerase catalyzes the transcription of DNA into RNA using the four ribonucleoside triphosphates as substrates. The chain is DNA-directed RNA polymerase subunit beta' from Salinispora tropica (strain ATCC BAA-916 / DSM 44818 / JCM 13857 / NBRC 105044 / CNB-440).